The following is a 260-amino-acid chain: MIVGVFANFQKELSKEILDKIVSVLKNEKIDWVLMNEKNKDSVKVNFLITIGGDGTLLNVVEKVAKENLPVLGINCGRVGYLTEEVADNIHFAIKKIIDNDYFIEERHLVEAHFKDKIFYALNDICLARSTFNIIDLSLYIDEVFAQEYRSDGIIIATATGSTAYSLSAGGPIVEPQLGVMVVTPICPHSLSSRSLVLGDDRVVKIKSESDEVLVVSDGRVADTLKKGEYLECKISSKKLKLVRLKKKNFYEVLREKIKE.

The active-site Proton acceptor is the aspartate 54. NAD(+) is bound by residues 54–55 (DG), 123–124 (ND), arginine 150, aspartate 152, and 163–168 (TAYSLS).

This sequence belongs to the NAD kinase family. A divalent metal cation is required as a cofactor.

It is found in the cytoplasm. It catalyses the reaction NAD(+) + ATP = ADP + NADP(+) + H(+). Its function is as follows. Involved in the regulation of the intracellular balance of NAD and NADP, and is a key enzyme in the biosynthesis of NADP. Catalyzes specifically the phosphorylation on 2'-hydroxyl of the adenosine moiety of NAD to yield NADP. This is NAD kinase from Caldicellulosiruptor saccharolyticus (strain ATCC 43494 / DSM 8903 / Tp8T 6331).